The chain runs to 350 residues: 3-dehydroquinate synthase (350 aa).

NAD(+) is bound by residues 63–68 (DGEEYK), 97–101 (GVIGD), 121–122 (TT), Lys-134, Lys-143, and 161–164 (FLKT). Residues Glu-176, His-235, and His-252 each contribute to the Zn(2+) site.

Belongs to the sugar phosphate cyclases superfamily. Dehydroquinate synthase family. Co(2+) is required as a cofactor. Zn(2+) serves as cofactor. The cofactor is NAD(+).

It localises to the cytoplasm. The enzyme catalyses 7-phospho-2-dehydro-3-deoxy-D-arabino-heptonate = 3-dehydroquinate + phosphate. It participates in metabolic intermediate biosynthesis; chorismate biosynthesis; chorismate from D-erythrose 4-phosphate and phosphoenolpyruvate: step 2/7. Its function is as follows. Catalyzes the conversion of 3-deoxy-D-arabino-heptulosonate 7-phosphate (DAHP) to dehydroquinate (DHQ). The protein is 3-dehydroquinate synthase of Sulfurovum sp. (strain NBC37-1).